The chain runs to 253 residues: Glutamate racemase (253 aa).

Residues 7 to 8 (DS) and 39 to 40 (YG) each bind substrate. C70 functions as the Proton donor/acceptor in the catalytic mechanism. 71 to 72 (NT) lines the substrate pocket. Residue C180 is the Proton donor/acceptor of the active site. 181-182 (TH) provides a ligand contact to substrate.

This sequence belongs to the aspartate/glutamate racemases family.

It carries out the reaction L-glutamate = D-glutamate. Its pathway is cell wall biogenesis; peptidoglycan biosynthesis. Functionally, provides the (R)-glutamate required for cell wall biosynthesis. This Halothermothrix orenii (strain H 168 / OCM 544 / DSM 9562) protein is Glutamate racemase.